Consider the following 125-residue polypeptide: MIYDFKAEIIKSKSSSSSKSGAHHWLLQRVTGVVLALCSFWLIYFMFTNKNNDINIIMWEFKKPFNIVILLITVTISLYHSVLGMRVVIEDYINCHKLRNTLIIIVKLFCILTIVAFIVAIFYSE.

At 1–24 (MIYDFKAEIIKSKSSSSSKSGAHH) the chain is on the cytoplasmic side. A helical membrane pass occupies residues 25-45 (WLLQRVTGVVLALCSFWLIYF). The Periplasmic portion of the chain corresponds to 46–67 (MFTNKNNDINIIMWEFKKPFNI). The chain crosses the membrane as a helical span at residues 68 to 89 (VILLITVTISLYHSVLGMRVVI). Residue H80 participates in heme binding. The Cytoplasmic portion of the chain corresponds to 90–99 (EDYINCHKLR). Y92 lines the a ubiquinone pocket. The helical transmembrane segment at 100 to 123 (NTLIIIVKLFCILTIVAFIVAIFY) threads the bilayer.

Part of an enzyme complex containing four subunits: a flavoprotein, an iron-sulfur protein, plus two membrane-anchoring proteins, SdhC and SdhD. Heme is required as a cofactor.

The protein localises to the cell inner membrane. Its pathway is carbohydrate metabolism; tricarboxylic acid cycle. Functionally, membrane-anchoring subunit of succinate dehydrogenase (SDH). This is Succinate dehydrogenase hydrophobic membrane anchor subunit (sdhD) from Rickettsia typhi (strain ATCC VR-144 / Wilmington).